A 668-amino-acid polypeptide reads, in one-letter code: Lebercilin-like protein (668 aa).

Positions 17–44 (SVALENNRRSAECKRSPGTGDFSRNSSA) are disordered. The span at 22-31 (NNRRSAECKR) shows a compositional bias: basic and acidic residues. Coiled coils occupy residues 148–259 (LHKI…EREE) and 305–336 (AAQT…IKNI). The disordered stretch occupies residues 351–402 (YPKVSSTKSVQADRKSLPFTSMRHQGTQKSDVPPLTTKGKKATGNMNHKEKS). Positions 368-380 (PFTSMRHQGTQKS) are enriched in polar residues. Positions 420-440 (EDSKTKYEDLSREEKHLEVQV) form a coiled coil. Disordered stretches follow at residues 495–520 (RSMQ…PLRQ), 533–581 (LHHG…FGKS), and 605–668 (SGYV…KIII). The span at 546–558 (AGNTKYSHSTSKH) shows a compositional bias: polar residues. Basic and acidic residues-rich tracts occupy residues 560 to 572 (SNRE…HSDS) and 621 to 632 (GSEEPLQSKESH). The segment covering 633 to 660 (PPSQASASNAFGDSKVTVVNSIKPSSPT) has biased composition (polar residues).

It belongs to the LCA5 family.

The polypeptide is Lebercilin-like protein (Macaca fascicularis (Crab-eating macaque)).